Here is a 912-residue protein sequence, read N- to C-terminus: Putative respiratory burst oxidase homolog protein J (912 aa).

2 disordered regions span residues 1-51 and 73-112; these read MKNN…GGGI and WRKS…RTTS. Residues 1–323 lie on the Cytoplasmic side of the membrane; the sequence is MKNNKKVGTE…VVVTAELMYE (323 aa). Polar residues-rich tracts occupy residues 29–44 and 78–87; these read SVKQ…NPES and NLGSPSTRKS. EF-hand-like stretches follow at residues 147-155 and 181-193; these read AVDGRLPKD and RQIK…DKEQ. Residues 205–240 form the EF-hand domain; that stretch reads DLDCRLQIFFDMCDKDGDGKLTEEEVKEVIVLSASA. 5 residues coordinate Ca(2+): aspartate 218, aspartate 220, aspartate 222, lysine 224, and glutamate 229. Position 294 is a phosphoserine (serine 294). The helical transmembrane segment at 324 to 344 threads the bilayer; it reads HWKKIWVVTLWLAVNVVLFMW. At 345-363 the chain is on the extracellular side; it reads KYEEFTTSPLYNITGRCLC. Residues 364 to 384 form a helical membrane-spanning segment; that stretch reads AAKGTAEILKLNMALILVPVL. The Ferric oxidoreductase domain maps to 366-523; the sequence is KGTAEILKLN…LLVIAYALLI (158 aa). Over 385–410 the chain is Cytoplasmic; that stretch reads RRTLTFLRSTFLNHLIPFDDNINFHK. A helical transmembrane segment spans residues 411 to 431; the sequence is LIAVAIAVISLLHTALHMLCN. The Extracellular portion of the chain corresponds to 432–458; it reads YPRLSSCPYNFYSDYAGNLLGAKQPTY. A helical transmembrane segment spans residues 459–479; that stretch reads LGLMLTPVSVTGVLMIIFMGI. Residues 480-510 lie on the Cytoplasmic side of the membrane; it reads SFTLAMHYFRRNIVKLPIPFNRLAGFNSFWY. Residues 511-531 form a helical membrane-spanning segment; it reads AHHLLVIAYALLIIHGYILII. The Extracellular segment spans residues 532–697; it reads EKPWYQKTTW…PYGAPAQSYQ (166 aa). The FAD-binding FR-type domain maps to 562–695; that stretch reads EHNHRVHIIK…KGPYGAPAQS (134 aa). Residues 698–718 traverse the membrane as a helical segment; sequence KFDILLLIGLGIGATPFISIL. Over 719–912 the chain is Cytoplasmic; the sequence is KDMLNNLKPG…TRFTFHKENF (194 aa).

It belongs to the RBOH (TC 5.B.1.3) family. In terms of assembly, monomer and homodimer.

Its subcellular location is the membrane. In terms of biological role, calcium-dependent NADPH oxidase that generates superoxide. This is Putative respiratory burst oxidase homolog protein J (RBOHJ) from Arabidopsis thaliana (Mouse-ear cress).